The sequence spans 107 residues: Nucleoid-associated protein BMEA_A0033 (107 aa).

Belongs to the YbaB/EbfC family. In terms of assembly, homodimer.

Its subcellular location is the cytoplasm. It is found in the nucleoid. Its function is as follows. Binds to DNA and alters its conformation. May be involved in regulation of gene expression, nucleoid organization and DNA protection. The chain is Nucleoid-associated protein BMEA_A0033 from Brucella melitensis biotype 2 (strain ATCC 23457).